We begin with the raw amino-acid sequence, 75 residues long: Putative membrane protein insertion efficiency factor (75 aa).

The protein belongs to the UPF0161 family.

It is found in the cell inner membrane. Functionally, could be involved in insertion of integral membrane proteins into the membrane. The sequence is that of Putative membrane protein insertion efficiency factor from Gloeothece citriformis (strain PCC 7424) (Cyanothece sp. (strain PCC 7424)).